Here is a 164-residue protein sequence, read N- to C-terminus: ATP synthase subunit b (164 aa).

Residues 6–26 form a helical membrane-spanning segment; that stretch reads GELVGNFILVTGSVIVLLLLI.

This sequence belongs to the ATPase B chain family. In terms of assembly, F-type ATPases have 2 components, F(1) - the catalytic core - and F(0) - the membrane proton channel. F(1) has five subunits: alpha(3), beta(3), gamma(1), delta(1), epsilon(1). F(0) has three main subunits: a(1), b(2) and c(10-14). The alpha and beta chains form an alternating ring which encloses part of the gamma chain. F(1) is attached to F(0) by a central stalk formed by the gamma and epsilon chains, while a peripheral stalk is formed by the delta and b chains.

It localises to the cell membrane. F(1)F(0) ATP synthase produces ATP from ADP in the presence of a proton or sodium gradient. F-type ATPases consist of two structural domains, F(1) containing the extramembraneous catalytic core and F(0) containing the membrane proton channel, linked together by a central stalk and a peripheral stalk. During catalysis, ATP synthesis in the catalytic domain of F(1) is coupled via a rotary mechanism of the central stalk subunits to proton translocation. Its function is as follows. Component of the F(0) channel, it forms part of the peripheral stalk, linking F(1) to F(0). The polypeptide is ATP synthase subunit b (Streptococcus pyogenes serotype M6 (strain ATCC BAA-946 / MGAS10394)).